The sequence spans 206 residues: Imidazole glycerol phosphate synthase subunit HisH (206 aa).

The Glutamine amidotransferase type-1 domain maps to 5 to 206 (SVVVLDYGSG…AVLRNWIERL (202 aa)). The active-site Nucleophile is Cys-83. Residues His-187 and Glu-189 contribute to the active site.

As to quaternary structure, heterodimer of HisH and HisF.

The protein resides in the cytoplasm. The enzyme catalyses 5-[(5-phospho-1-deoxy-D-ribulos-1-ylimino)methylamino]-1-(5-phospho-beta-D-ribosyl)imidazole-4-carboxamide + L-glutamine = D-erythro-1-(imidazol-4-yl)glycerol 3-phosphate + 5-amino-1-(5-phospho-beta-D-ribosyl)imidazole-4-carboxamide + L-glutamate + H(+). It carries out the reaction L-glutamine + H2O = L-glutamate + NH4(+). Its pathway is amino-acid biosynthesis; L-histidine biosynthesis; L-histidine from 5-phospho-alpha-D-ribose 1-diphosphate: step 5/9. IGPS catalyzes the conversion of PRFAR and glutamine to IGP, AICAR and glutamate. The HisH subunit catalyzes the hydrolysis of glutamine to glutamate and ammonia as part of the synthesis of IGP and AICAR. The resulting ammonia molecule is channeled to the active site of HisF. This Mycolicibacterium paratuberculosis (strain ATCC BAA-968 / K-10) (Mycobacterium paratuberculosis) protein is Imidazole glycerol phosphate synthase subunit HisH.